Here is a 702-residue protein sequence, read N- to C-terminus: Glucosidase 2 subunit beta (702 aa).

A signal peptide spans 1 to 20 (MVSMFSLFLLLIEQSPLVAS). Residue Asn145 is glycosylated (N-linked (GlcNAc...) asparagine). Residues 163–228 (SYREGKEALE…LRGEYFNQLS (66 aa)) adopt a coiled-coil conformation. N-linked (GlcNAc...) asparagine glycosylation is found at Asn240 and Asn358. The disordered stretch occupies residues 435-457 (PKVLPPDAVESEQDTNSDHIGTS). Residues 478–517 (KDLVSLEKRFRSCESQVSLLENELKQKMDYKKLLDETEDE) adopt a coiled-coil conformation. Residues Asn520 and Asn525 are each glycosylated (N-linked (GlcNAc...) asparagine). The region spanning 537–689 (SYCLDDILDN…DVVGPLGCNK (153 aa)) is the MRH domain. Cystine bridges form between Cys539/Cys552, Cys646/Cys675, and Cys660/Cys687. N-linked (GlcNAc...) asparagine glycans are attached at residues Asn688 and Asn699.

Heterodimer of a catalytic subunit alpha (ROT2) and a subunit beta (GTB1).

The protein localises to the endoplasmic reticulum. Subunit of glucosidase 2, which cleaves sequentially the 2 innermost alpha-1,3-linked glucose residues from the Glc(2)Man(9)GlcNAc(2) oligosaccharide precursor of immature glycoproteins. Specifically required for the cleavage of the final glucose. The polypeptide is Glucosidase 2 subunit beta (GTB1) (Saccharomyces cerevisiae (strain ATCC 204508 / S288c) (Baker's yeast)).